Consider the following 321-residue polypeptide: Basic peroxidase (321 aa).

The N-terminal stretch at 1 to 30 is a signal peptide; that stretch reads MSYHKSSGTTLMVPLFMLLISVNYFMSCNA. Position 31 is a pyrrolidone carboxylic acid (Gln31). Cystine bridges form between Cys41-Cys117, Cys74-Cys79, Cys123-Cys317, and Cys202-Cys228. Catalysis depends on His72, which acts as the Proton acceptor. Asp73, Val76, Gly78, Asp80, and Ser82 together coordinate Ca(2+). A substrate-binding site is contributed by Pro165. His195 is a heme b binding site. Thr196 is a binding site for Ca(2+). N-linked (GlcNAc...) asparagine glycosylation is found at Asn211 and Asn221. Ca(2+)-binding residues include Asp241, Thr244, and Asp249.

The protein belongs to the peroxidase family. Classical plant (class III) peroxidase subfamily. Heme b serves as cofactor. Ca(2+) is required as a cofactor. In terms of processing, N-glycosylated. As to expression, expressed in tracheary elements, roots, young and old hypocotyls, and stems in the partially glycosylated form and in roots and young hypocotyls in the fully glycosylated form. None of the isoforms is significantly expressed in leaves or cotyledons.

The protein localises to the secreted. It catalyses the reaction 2 a phenolic donor + H2O2 = 2 a phenolic radical donor + 2 H2O. Functionally, removal of H(2)O(2), oxidation of toxic reductants, biosynthesis and degradation of lignin, suberization, auxin catabolism, response to environmental stresses such as wounding, pathogen attack and oxidative stress. These functions might be dependent on each isozyme/isoform in each plant tissue. Involved in the synthesis of highly polymerized lignins. The sequence is that of Basic peroxidase (POD3) from Zinnia elegans (Garden zinnia).